Reading from the N-terminus, the 397-residue chain is MIFKYIQEPVLGSLFRSRDSLIYLNRSIDQMGWRLPPRTKPYWWLYYIWTLVVIVLVFIFIPYGLIMTGIKEFKNFTTTDLFTYVQVPVNTNASIMKGIIVLFMRRRFSRAQKMMDAMDIRCTKMEEKVQVHRAAALCNRVVVIYHCIYFGYLSMALTGALVIGKTPFCLYNPLVNPDDHFYLATAIESVTMAGIILANLILDVYPIIYVVVLRIHMELLSERIKTLRTDVEKGDDQHYAELVECVKDHKLIVEYGNTLRPMISATMFIQLLSVGLLLGLAAVSMQFYNTVMERVVSGVYTIAILSQTFPFCYVCEQLSSDCESLTNTLFHSKWIGAERRYRTTMLYFIHNVQQSILFTAGGIFPICLNTNIKMAKFAFSVVTIVNEMDLAEKLRRE.

Residues 1 to 46 (MIFKYIQEPVLGSLFRSRDSLIYLNRSIDQMGWRLPPRTKPYWWLY) lie on the Cytoplasmic side of the membrane. Residues 47-67 (YIWTLVVIVLVFIFIPYGLIM) form a helical membrane-spanning segment. The Extracellular segment spans residues 68 to 83 (TGIKEFKNFTTTDLFT). N-linked (GlcNAc...) asparagine glycosylation is present at Asn75. A helical transmembrane segment spans residues 84–104 (YVQVPVNTNASIMKGIIVLFM). At 105–142 (RRRFSRAQKMMDAMDIRCTKMEEKVQVHRAAALCNRVV) the chain is on the cytoplasmic side. Residues 143 to 163 (VIYHCIYFGYLSMALTGALVI) form a helical membrane-spanning segment. Residues 164–192 (GKTPFCLYNPLVNPDDHFYLATAIESVTM) are Extracellular-facing. Residues 193 to 213 (AGIILANLILDVYPIIYVVVL) form a helical membrane-spanning segment. The Cytoplasmic segment spans residues 214–262 (RIHMELLSERIKTLRTDVEKGDDQHYAELVECVKDHKLIVEYGNTLRPM). A helical membrane pass occupies residues 263-283 (ISATMFIQLLSVGLLLGLAAV). Topologically, residues 284 to 294 (SMQFYNTVMER) are extracellular. The helical transmembrane segment at 295-315 (VVSGVYTIAILSQTFPFCYVC) threads the bilayer. Topologically, residues 316 to 347 (EQLSSDCESLTNTLFHSKWIGAERRYRTTMLY) are cytoplasmic. The chain crosses the membrane as a helical span at residues 348-368 (FIHNVQQSILFTAGGIFPICL). At 369–397 (NTNIKMAKFAFSVVTIVNEMDLAEKLRRE) the chain is on the extracellular side.

The protein belongs to the insect chemoreceptor superfamily. Heteromeric odorant receptor channel (TC 1.A.69) family. Or2a subfamily. As to quaternary structure, interacts with Orco. Complexes exist early in the endomembrane system in olfactory sensory neurons (OSNs), coupling these complexes to the conserved ciliary trafficking pathway. Expressed in olfactory sensory neurons in the antenna.

It localises to the cell membrane. In terms of biological role, odorant receptor which mediates acceptance or avoidance behavior, depending on its substrates. The odorant receptor repertoire encodes a large collection of odor stimuli that vary widely in identity, intensity, and duration. May form a complex with Orco to form odorant-sensing units, providing sensitive and prolonged odorant signaling and calcium permeability. The sequence is that of Odorant receptor 85a (Or85a) from Drosophila melanogaster (Fruit fly).